A 166-amino-acid chain; its full sequence is NAD(P)H-quinone oxidoreductase subunit I, chloroplastic (166 aa).

2 consecutive 4Fe-4S ferredoxin-type domains span residues 55-84 (GRIH…VDWK) and 95-124 (LNYS…MTEE). [4Fe-4S] cluster contacts are provided by C64, C67, C70, C74, C104, C107, C110, and C114.

This sequence belongs to the complex I 23 kDa subunit family. As to quaternary structure, NDH is composed of at least 16 different subunits, 5 of which are encoded in the nucleus. [4Fe-4S] cluster serves as cofactor.

It localises to the plastid. It is found in the chloroplast thylakoid membrane. It catalyses the reaction a plastoquinone + NADH + (n+1) H(+)(in) = a plastoquinol + NAD(+) + n H(+)(out). The catalysed reaction is a plastoquinone + NADPH + (n+1) H(+)(in) = a plastoquinol + NADP(+) + n H(+)(out). NDH shuttles electrons from NAD(P)H:plastoquinone, via FMN and iron-sulfur (Fe-S) centers, to quinones in the photosynthetic chain and possibly in a chloroplast respiratory chain. The immediate electron acceptor for the enzyme in this species is believed to be plastoquinone. Couples the redox reaction to proton translocation, and thus conserves the redox energy in a proton gradient. This Steiractinia sodiroi protein is NAD(P)H-quinone oxidoreductase subunit I, chloroplastic.